A 992-amino-acid polypeptide reads, in one-letter code: Ribosome quality control complex subunit NEMF homolog (992 aa).

Basic and acidic residues predominate over residues 214 to 231; that stretch reads KETTEETPEAEDKPEKGG. The tract at residues 214 to 245 is disordered; that stretch reads KETTEETPEAEDKPEKGGKKQRKKQQNTKLEQ. Coiled-coil stretches lie at residues 331–370 and 481–514; these read STQE…LTKV and SAAQ…VRTI. 2 disordered regions span residues 688-715 and 771-895; these read EVEH…NTEI and GPSR…GDVD. The segment covering 702 to 715 has biased composition (polar residues); that stretch reads SNINLSEPSSNTEI. Residues 774–839 adopt a coiled-coil conformation; that stretch reads RKKQVSAKKT…QDDEEREIRM (66 aa). A compositionally biased stretch (basic and acidic residues) spans 782–796; the sequence is KTKEDKARAKQEAAK. Basic residues predominate over residues 814-825; sequence RGQKGKLKKMKQ. A compositionally biased stretch (basic and acidic residues) spans 845–874; it reads SGKEKPQASADKVVEKSESTKEYVKPEKSA.

This sequence belongs to the NEMF family. As to quaternary structure, component of the ribosome quality control complex (RQC), composed of at least the E3 ubiquitin ligase l(3)76BDr/LTN1 and Clbn/NEMF associated with the 60S ribosomal subunit. The complex probably also contains TCF25 as well as TER94/VCP and its ubiquitin-binding cofactors. Interacts (via its C-terminus) with pros (via its homeobox). Interacts (via its N-terminus) with emb. As to expression, expressed in enterocytes (at protein level).

The protein resides in the nucleus. Its subcellular location is the cytoplasm. The protein localises to the mitochondrion outer membrane. Key component of the ribosome quality control complex (RQC), a ribosome-associated complex that mediates the extraction of incompletely synthesized nascent chains from stalled ribosomes as well as their ubiquitin-mediated proteasomal degradation. Thereby, frees 60S subunit ribosomes from the stalled translation complex and prevents the accumulation of nascent polypeptide chains that are potentially toxic for the cell. Within the RQC complex, Clbn/NEMF specifically binds stalled 60S ribosomal subunits by recognizing an exposed, nascent chain-conjugated tRNA moiety. Following binding to stalled 60S ribosomal subunits, Clbn/NEMF mediates CAT tailing by recruiting alanine-charged tRNA to the A-site and directing the elongation of stalled nascent chains independently of mRNA or 40S subunits, leading to non-templated C-terminal alanine extensions (CAT tails). On mitochondrial surface, plays a role in mitochondrial-stress induced translational termination impairment and protein carboxyl terminal extension (MISTERMINATE). Plays a role in regulating nuclear transport possibly through directly binding to both emb and cargo proteins. Plays a role in the regulation of G1-to-S cell cycle transition. Regulates S phase checkpoint by antagonizing E2F1 activity. Together with hid and tefu/ATM, plays a role in DNA damage-induced apoptosis through both p53-dependent and -independent activity. Plays an essential role in the regulation of mitochondrial structure and redox state in enterocytes which is essential for the control of intestinal stem cells proliferation and intestinal homeostasis. The chain is Ribosome quality control complex subunit NEMF homolog from Drosophila melanogaster (Fruit fly).